The following is a 265-amino-acid chain: GTP cyclohydrolase 1 type 2 homolog (265 aa).

The a divalent metal cation site is built by His-65, Asp-103, His-225, and Glu-228.

This sequence belongs to the GTP cyclohydrolase I type 2/NIF3 family. Homohexamer.

This Streptococcus pneumoniae serotype 4 (strain ATCC BAA-334 / TIGR4) protein is GTP cyclohydrolase 1 type 2 homolog.